The chain runs to 257 residues: tRNA (guanine-N(7)-)-methyltransferase (257 aa).

Residues 1-58 form a disordered region; that stretch reads MQPIEQPGTGPDDITPESQDTNTAESAESGAETGHPRRIRSFVRRAGRTSTGQQRAIN. A compositionally biased stretch (polar residues) spans 16–26; the sequence is PESQDTNTAES. The span at 36-47 shows a compositional bias: basic residues; it reads PRRIRSFVRRAG. S-adenosyl-L-methionine contacts are provided by E89, E114, D141, and D164. The active site involves D164. K168 is a substrate binding site. An interaction with RNA region spans residues 170-175; the sequence is RHNKRR. Substrate-binding positions include D200 and 235–238; that span reads TKFE.

The protein belongs to the class I-like SAM-binding methyltransferase superfamily. TrmB family.

The enzyme catalyses guanosine(46) in tRNA + S-adenosyl-L-methionine = N(7)-methylguanosine(46) in tRNA + S-adenosyl-L-homocysteine. Its pathway is tRNA modification; N(7)-methylguanine-tRNA biosynthesis. Functionally, catalyzes the formation of N(7)-methylguanine at position 46 (m7G46) in tRNA. The protein is tRNA (guanine-N(7)-)-methyltransferase of Ralstonia pickettii (strain 12J).